The primary structure comprises 299 residues: Taste receptor type 2 member 16 (299 aa).

Residues 1-5 (MVPTQ) are Extracellular-facing. The chain crosses the membrane as a helical span at residues 6–26 (VTIFSIIMYVLESLVIIVQSC). The Cytoplasmic portion of the chain corresponds to 27–47 (TTVAVLFREWMHFQRLSPVET). A helical transmembrane segment spans residues 48–68 (ILISLGISHFCLQWTSMLYNF). At 69–82 (GTYSRPVLLFWKVS) the chain is on the extracellular side. A helical transmembrane segment spans residues 83 to 103 (VVWEFMNILTFWLTSWLAVLY). Residues 104–125 (CVKVSSFTHPIFLWLRMKILKL) lie on the Cytoplasmic side of the membrane. Residues 126–146 (VLWLILGALIASCLSIIPSVV) form a helical membrane-spanning segment. The Extracellular segment spans residues 147–183 (KYHIQMELVTLDNLPKNNSLILRLQQFEWYFSNPLKM). An N-linked (GlcNAc...) asparagine glycan is attached at asparagine 163. Residues 184–204 (IGFGIPFFVFLASIILLTVSL) traverse the membrane as a helical segment. Over 205–233 (VQHWVQMKHYSSSNSSLKAQFTVLKSLAT) the chain is Cytoplasmic. The chain crosses the membrane as a helical span at residues 234 to 254 (FFTFFTSYFLTIVISFIGTVF). At 255–258 (DKKS) the chain is on the extracellular side. Residues 259 to 279 (WFWVCEAVIYGLVCIHFTSLM) traverse the membrane as a helical segment. The Cytoplasmic segment spans residues 280–299 (MSNPALKKALKLQFWSPEPS).

The protein belongs to the G-protein coupled receptor T2R family. As to quaternary structure, interacts with RTP3 and RTP4.

The protein localises to the cell membrane. In terms of biological role, gustducin-coupled receptor implicated in the perception of bitter compounds in the oral cavity and the gastrointestinal tract. Signals through PLCB2 and the calcium-regulated cation channel TRPM5. This chain is Taste receptor type 2 member 16 (Tas2r16), found in Mus musculus (Mouse).